A 257-amino-acid polypeptide reads, in one-letter code: Putative hydro-lyase YcsI (257 aa).

The protein belongs to the D-glutamate cyclase family.

This chain is Putative hydro-lyase YcsI (ycsI), found in Bacillus subtilis (strain 168).